We begin with the raw amino-acid sequence, 166 residues long: SsrA-binding protein (166 aa).

Residues 146-166 (KRAAEKEKQSKKDVKAAMERY) are disordered.

Belongs to the SmpB family.

It localises to the cytoplasm. Functionally, required for rescue of stalled ribosomes mediated by trans-translation. Binds to transfer-messenger RNA (tmRNA), required for stable association of tmRNA with ribosomes. tmRNA and SmpB together mimic tRNA shape, replacing the anticodon stem-loop with SmpB. tmRNA is encoded by the ssrA gene; the 2 termini fold to resemble tRNA(Ala) and it encodes a 'tag peptide', a short internal open reading frame. During trans-translation Ala-aminoacylated tmRNA acts like a tRNA, entering the A-site of stalled ribosomes, displacing the stalled mRNA. The ribosome then switches to translate the ORF on the tmRNA; the nascent peptide is terminated with the 'tag peptide' encoded by the tmRNA and targeted for degradation. The ribosome is freed to recommence translation, which seems to be the essential function of trans-translation. The protein is SsrA-binding protein of Synechococcus sp. (strain CC9605).